A 754-amino-acid polypeptide reads, in one-letter code: ToMV susceptible protein tm-1(GCR26) (754 aa).

Residues 1–201 (MATAQSNSPR…AGMVIGRLES (201 aa)) are N-terminal inhibitory domain NN. ATP contacts are provided by residues 18–20 (DTK), threonine 55, arginine 92, and 124–127 (GSGG). The interval 211–431 (KFTVGVTMFG…VDSFLEMSPK (221 aa)) is N-terminal inhibitory domain NC.

The protein belongs to the UPF0261 family. In terms of assembly, homodimer. (Microbial infection) Binds, via an ATP bridge, to the tobamoviruses avirulent (Avr) replication proteins (large and small subunits, e.g. tobacco mild green mosaic virus (TMGMV) AC P18339 and pepper mild mottle virus (PMMoV) AC P89657) to inhibit their function after the translation of tobamoviruses RNA, but before the viral replication complex formation on the membrane surfaces; this interaction is not possible with resistance-breaking strains replication proteins.

In terms of biological role, inhibitor of viral RNA replication which confers resistance to some tobamoviruses including tobacco mild green mosaic virus (TMGMV) and pepper mild mottle virus (PMMoV), but not to tomato mosaic virus (ToMV strains L, ToMV0 and ToMV1-2) and tobacco mosaic virus (TMV). Prevents tobamoviruses RNA replication by affecting the association of tobamoviruses replication proteins (large and small subunits) with host membrane-associated proteins (e.g. TOM1, TOM2A and ARL8), thus inhibiting the replication complex formation on the membranes and avoiding viral negative-strand RNA synthesis. This Solanum lycopersicum (Tomato) protein is ToMV susceptible protein tm-1(GCR26).